A 124-amino-acid polypeptide reads, in one-letter code: Colorectal cancer-associated protein 1 (124 aa).

Residues 77 to 97 (LYGCFCVGLVSGMAISVLLLA) traverse the membrane as a helical segment.

Expressed in gastrointestinal and immune tissue, as well as prostate, testis and ovary. Expressed in lamina propria and eosinophils but not in epithelial cells. Expression is greater in benign adjacent tissues than in colon tumors.

It localises to the membrane. This is Colorectal cancer-associated protein 1 (COLCA1) from Homo sapiens (Human).